The following is a 310-amino-acid chain: Carbamate kinase 1 (310 aa).

This sequence belongs to the carbamate kinase family.

The protein localises to the cytoplasm. The enzyme catalyses hydrogencarbonate + NH4(+) + ATP = carbamoyl phosphate + ADP + H2O + H(+). The protein operates within metabolic intermediate metabolism; carbamoyl phosphate degradation; CO(2) and NH(3) from carbamoyl phosphate: step 1/1. In Staphylococcus aureus (strain MRSA252), this protein is Carbamate kinase 1 (arcC1).